A 475-amino-acid polypeptide reads, in one-letter code: Trifunctional enzyme subunit beta, mitochondrial (475 aa).

The N-terminal 34 residues, 1 to 34 (MTTILTYPFKNLPTASKWALRFSIRPLSCSSQLR), are a transit peptide targeting the mitochondrion. Lys-73 is subject to N6-acetyllysine; alternate. The residue at position 73 (Lys-73) is an N6-succinyllysine; alternate. Residue Cys-139 is the Acyl-thioester intermediate of the active site. The stretch at 174–221 (IRHSRKMRKLMLDLNKAKSMGQRLSLISKFRFNFLAPELPAVSEFSTS) is an intramembrane region. Position 189 is an N6-acetyllysine; alternate (Lys-189). Lys-189 carries the post-translational modification N6-succinyllysine; alternate. N6-succinyllysine is present on residues Lys-191, Lys-273, and Lys-292. Lys-294 is subject to N6-acetyllysine; alternate. Lys-294 is modified (N6-succinyllysine; alternate). N6-acetyllysine is present on Lys-299. Lys-333 is subject to N6-acetyllysine; alternate. Lys-333 carries the N6-succinyllysine; alternate modification. N6-acetyllysine occurs at positions 349 and 362. Catalysis depends on Cys-459, which acts as the Proton donor/acceptor.

It belongs to the thiolase-like superfamily. Thiolase family. In terms of assembly, heterotetramer of 2 alpha/HADHA and 2 beta/HADHB subunits; forms the mitochondrial trifunctional enzyme. Also purified as higher order heterooligomers including a 4 alpha/HADHA and 4 beta/HADHB heterooligomer which physiological significance remains unclear. The mitochondrial trifunctional enzyme interacts with MTLN. Interacts with RSAD2/viperin.

The protein localises to the mitochondrion. Its subcellular location is the mitochondrion inner membrane. It is found in the mitochondrion outer membrane. The protein resides in the endoplasmic reticulum. It carries out the reaction an acyl-CoA + acetyl-CoA = a 3-oxoacyl-CoA + CoA. The catalysed reaction is butanoyl-CoA + acetyl-CoA = 3-oxohexanoyl-CoA + CoA. The enzyme catalyses hexanoyl-CoA + acetyl-CoA = 3-oxooctanoyl-CoA + CoA. It catalyses the reaction octanoyl-CoA + acetyl-CoA = 3-oxodecanoyl-CoA + CoA. It carries out the reaction decanoyl-CoA + acetyl-CoA = 3-oxododecanoyl-CoA + CoA. The catalysed reaction is dodecanoyl-CoA + acetyl-CoA = 3-oxotetradecanoyl-CoA + CoA. The enzyme catalyses tetradecanoyl-CoA + acetyl-CoA = 3-oxohexadecanoyl-CoA + CoA. It functions in the pathway lipid metabolism; fatty acid beta-oxidation. Mitochondrial trifunctional enzyme catalyzes the last three of the four reactions of the mitochondrial beta-oxidation pathway. The mitochondrial beta-oxidation pathway is the major energy-producing process in tissues and is performed through four consecutive reactions breaking down fatty acids into acetyl-CoA. Among the enzymes involved in this pathway, the trifunctional enzyme exhibits specificity for long-chain fatty acids. Mitochondrial trifunctional enzyme is a heterotetrameric complex composed of two proteins, the trifunctional enzyme subunit alpha/HADHA carries the 2,3-enoyl-CoA hydratase and the 3-hydroxyacyl-CoA dehydrogenase activities, while the trifunctional enzyme subunit beta/HADHB described here bears the 3-ketoacyl-CoA thiolase activity. The polypeptide is Trifunctional enzyme subunit beta, mitochondrial (HADHB) (Pan troglodytes (Chimpanzee)).